The chain runs to 398 residues: MSKEKVILAYSGGLDTSVAITWLKKDYDVVSVCMDVGEGKDLDFIHDKALKVGAVESYVIDVKDEFATDYVLVAHQSHAYYEQKYPLVSALSRPLISKKLVEIAHQIGATTIAHGCTGKGNDQVRFEVSIAALDLNLKVIAPVREWKWSREEEIYYAKENGVPVPADLDNPYSVDQNLWGRANECGILENPWNQAPEEAFGITTSPEQAPDMPEYIEIEFSEGVPVSLNGEVLKLADLIQKLNEIAGKHGVGRIDHVENRLVGIKSREIYECPGAVTLLTAHKEIEDLTLVREVAHFKPIIENELSNLIYNALWFSSATQALIAYIKETQKVVNGTAKVKLYKGSAQVVARKSPSSLYDENLATYTSADTFDQDAAVGFIKLWGLPTKVHSEVQKSAK.

Residue 9-17 coordinates ATP; it reads AYSGGLDTS. L-citrulline is bound at residue tyrosine 85. ATP is bound at residue glycine 115. 3 residues coordinate L-aspartate: threonine 117, asparagine 121, and aspartate 122. Asparagine 121 serves as a coordination point for L-citrulline. L-citrulline contacts are provided by arginine 125, serine 173, glutamate 258, and tyrosine 270.

Belongs to the argininosuccinate synthase family. Type 1 subfamily. As to quaternary structure, homotetramer.

The protein localises to the cytoplasm. It carries out the reaction L-citrulline + L-aspartate + ATP = 2-(N(omega)-L-arginino)succinate + AMP + diphosphate + H(+). It functions in the pathway amino-acid biosynthesis; L-arginine biosynthesis; L-arginine from L-ornithine and carbamoyl phosphate: step 2/3. The protein is Argininosuccinate synthase of Streptococcus pneumoniae (strain Hungary19A-6).